We begin with the raw amino-acid sequence, 256 residues long: GTP cyclohydrolase FolE2 (256 aa).

It belongs to the GTP cyclohydrolase IV family.

It carries out the reaction GTP + H2O = 7,8-dihydroneopterin 3'-triphosphate + formate + H(+). It participates in cofactor biosynthesis; 7,8-dihydroneopterin triphosphate biosynthesis; 7,8-dihydroneopterin triphosphate from GTP: step 1/1. In terms of biological role, converts GTP to 7,8-dihydroneopterin triphosphate. This Maridesulfovibrio salexigens (strain ATCC 14822 / DSM 2638 / NCIMB 8403 / VKM B-1763) (Desulfovibrio salexigens) protein is GTP cyclohydrolase FolE2.